A 228-amino-acid chain; its full sequence is UPF0758 protein CLI_3057 (228 aa).

The 123-residue stretch at 106–228 (KINTPLDVSN…YVSMKEKGTI (123 aa)) folds into the MPN domain. Zn(2+)-binding residues include histidine 177, histidine 179, and aspartate 190. The JAMM motif signature appears at 177 to 190 (HNHPSGDPTPSKED).

Belongs to the UPF0758 family.

This is UPF0758 protein CLI_3057 from Clostridium botulinum (strain Langeland / NCTC 10281 / Type F).